The following is an 87-amino-acid chain: Signal recognition particle 19 kDa protein (87 aa).

Belongs to the SRP19 family. In terms of assembly, part of the signal recognition particle protein translocation system, which is composed of SRP and FtsY. Archaeal SRP consists of a 7S RNA molecule of 300 nucleotides and two protein subunits: SRP54 and SRP19.

It is found in the cytoplasm. In terms of biological role, involved in targeting and insertion of nascent membrane proteins into the cytoplasmic membrane. Binds directly to 7S RNA and mediates binding of the 54 kDa subunit of the SRP. This Methanocaldococcus jannaschii (strain ATCC 43067 / DSM 2661 / JAL-1 / JCM 10045 / NBRC 100440) (Methanococcus jannaschii) protein is Signal recognition particle 19 kDa protein.